Here is a 330-residue protein sequence, read N- to C-terminus: Protoheme IX farnesyltransferase (330 aa).

The next 9 helical transmembrane spans lie at 33–53, 54–74, 101–121, 126–146, 154–174, 180–200, 227–247, 250–270, and 308–328; these read VMTLVVFTAFAGLIAAPVDAD, PFLAFMSILCLAVGAGAAGAL, VSNAYGFGVVASILSVLLMAL, LAAGLLAFSIFFYAVIYTMIL, IVIGGAAGAFPPMIGWVAATG, AVILFMIIFLWTPPHSWALAL, ILLYSIVLVIFAGAPVLTGLG, VYGATSLGGGALFLLLAWRIF, and VLFAALIVEHAFGAYVAIPGV.

Belongs to the UbiA prenyltransferase family. Protoheme IX farnesyltransferase subfamily. Interacts with CtaA.

Its subcellular location is the cell inner membrane. It catalyses the reaction heme b + (2E,6E)-farnesyl diphosphate + H2O = Fe(II)-heme o + diphosphate. Its pathway is porphyrin-containing compound metabolism; heme O biosynthesis; heme O from protoheme: step 1/1. Functionally, converts heme B (protoheme IX) to heme O by substitution of the vinyl group on carbon 2 of heme B porphyrin ring with a hydroxyethyl farnesyl side group. This is Protoheme IX farnesyltransferase from Maricaulis maris (strain MCS10) (Caulobacter maris).